The chain runs to 200 residues: Transcription elongation factor A protein-like 3 (200 aa).

The segment at 1–200 (MEKPYNKNEG…QRGLHDIPYL (200 aa)) is disordered. Over residues 20-36 (DEVEPDDEGKSDEEEKP) the composition is skewed to acidic residues. Position 30 is a phosphoserine (Ser-30). The span at 37–50 (DVEGKTECEGKRED) shows a compositional bias: basic and acidic residues. Residues 51–64 (EGEPGDEGQLEDEG) show a composition bias toward acidic residues. The residue at position 65 (Ser-65) is a Phosphoserine. 3 stretches are compositionally biased toward basic and acidic residues: residues 65–80 (SQEK…KPQG), 96–107 (AAEKRPAEDYVP), and 115–154 (DRGT…EELR).

The protein belongs to the TFS-II family. TFA subfamily.

The protein resides in the nucleus. In terms of biological role, may be involved in transcriptional regulation. This Homo sapiens (Human) protein is Transcription elongation factor A protein-like 3 (TCEAL3).